The sequence spans 241 residues: 1-(5-phosphoribosyl)-5-[(5-phosphoribosylamino)methylideneamino] imidazole-4-carboxamide isomerase (241 aa).

Residue aspartate 10 is the Proton acceptor of the active site. Catalysis depends on aspartate 131, which acts as the Proton donor.

It belongs to the HisA/HisF family.

It is found in the cytoplasm. The enzyme catalyses 1-(5-phospho-beta-D-ribosyl)-5-[(5-phospho-beta-D-ribosylamino)methylideneamino]imidazole-4-carboxamide = 5-[(5-phospho-1-deoxy-D-ribulos-1-ylimino)methylamino]-1-(5-phospho-beta-D-ribosyl)imidazole-4-carboxamide. Its pathway is amino-acid biosynthesis; L-histidine biosynthesis; L-histidine from 5-phospho-alpha-D-ribose 1-diphosphate: step 4/9. This Hyphomonas neptunium (strain ATCC 15444) protein is 1-(5-phosphoribosyl)-5-[(5-phosphoribosylamino)methylideneamino] imidazole-4-carboxamide isomerase.